Consider the following 64-residue polypeptide: Large ribosomal subunit protein bL35 (64 aa).

Residues 19–41 form a disordered region; the sequence is SGKVKRERMNGSHNLEHKNRKRT. Positions 25 to 35 are enriched in basic and acidic residues; that stretch reads ERMNGSHNLEH.

The protein belongs to the bacterial ribosomal protein bL35 family.

This is Large ribosomal subunit protein bL35 from Chlorobaculum tepidum (strain ATCC 49652 / DSM 12025 / NBRC 103806 / TLS) (Chlorobium tepidum).